A 71-amino-acid chain; its full sequence is Pro-MCH (71 aa).

The first 20 residues, 1 to 20 (AKMNLSSYILILTFSLFSQG), serve as a signal peptide directing secretion.

The protein belongs to the melanin-concentrating hormone family.

Its subcellular location is the secreted. The sequence is that of Pro-MCH (PMCH) from Pan paniscus (Pygmy chimpanzee).